We begin with the raw amino-acid sequence, 291 residues long: 33 kDa chaperonin (291 aa).

2 disulfides stabilise this stretch: Cys-229–Cys-231 and Cys-262–Cys-265.

It belongs to the HSP33 family. Post-translationally, under oxidizing conditions two disulfide bonds are formed involving the reactive cysteines. Under reducing conditions zinc is bound to the reactive cysteines and the protein is inactive.

Its subcellular location is the cytoplasm. Redox regulated molecular chaperone. Protects both thermally unfolding and oxidatively damaged proteins from irreversible aggregation. Plays an important role in the bacterial defense system toward oxidative stress. In Vibrio parahaemolyticus serotype O3:K6 (strain RIMD 2210633), this protein is 33 kDa chaperonin.